The sequence spans 1392 residues: DNA-directed RNA polymerase subunit beta (1392 aa).

This sequence belongs to the RNA polymerase beta chain family. In terms of assembly, the RNAP catalytic core consists of 2 alpha, 1 beta, 1 beta' and 1 omega subunit. When a sigma factor is associated with the core the holoenzyme is formed, which can initiate transcription.

It carries out the reaction RNA(n) + a ribonucleoside 5'-triphosphate = RNA(n+1) + diphosphate. Functionally, DNA-dependent RNA polymerase catalyzes the transcription of DNA into RNA using the four ribonucleoside triphosphates as substrates. The protein is DNA-directed RNA polymerase subunit beta of Neisseria meningitidis serogroup B (strain ATCC BAA-335 / MC58).